Consider the following 388-residue polypeptide: GTPase Obg (388 aa).

In terms of domain architecture, Obg spans 4-162 (SNFVDYVKIY…MTVIMELKLL (159 aa)). Residues 163-329 (ADVGLVGFPN…LKDILWEELN (167 aa)) enclose the OBG-type G domain. GTP-binding positions include 169–176 (GFPNAGKS), 194–198 (FTTLE), 216–219 (DIPG), 283–286 (TKSD), and 310–312 (SSV). Residues serine 176 and threonine 196 each contribute to the Mg(2+) site. The interval 352–388 (LKDMGEDEELDYEYEEDADDEDDDLDYEYEEEDWEEK) is disordered. The span at 356–388 (GEDEELDYEYEEDADDEDDDLDYEYEEEDWEEK) shows a compositional bias: acidic residues.

Belongs to the TRAFAC class OBG-HflX-like GTPase superfamily. OBG GTPase family. In terms of assembly, monomer. The cofactor is Mg(2+).

It is found in the cytoplasm. In terms of biological role, an essential GTPase which binds GTP, GDP and possibly (p)ppGpp with moderate affinity, with high nucleotide exchange rates and a fairly low GTP hydrolysis rate. Plays a role in control of the cell cycle, stress response, ribosome biogenesis and in those bacteria that undergo differentiation, in morphogenesis control. In Bacteroides thetaiotaomicron (strain ATCC 29148 / DSM 2079 / JCM 5827 / CCUG 10774 / NCTC 10582 / VPI-5482 / E50), this protein is GTPase Obg.